The sequence spans 248 residues: Inner membrane protein pE248R (248 aa).

Residue G2 is the site of N-myristoyl glycine; by host attachment. The Cytoplasmic segment spans residues 2 to 199; that stretch reads GGSTSKNSFK…ADAISAVFKN (198 aa). Residues 200–220 traverse the membrane as a helical segment; that stretch reads IMVAAVVIVLIIVGFIAVFYF. The Extracellular portion of the chain corresponds to 221–248; sequence LHSRHRHEEEEEAEPLISNKVLKNAAVS.

It belongs to the asfivirus E248R family. In terms of assembly, interacts with A151R.

Its subcellular location is the host membrane. The protein resides in the virion membrane. Its function is as follows. Essential for viral fusion with host endosomal membrane and core release. This chain is Inner membrane protein pE248R, found in Ornithodoros (relapsing fever ticks).